The chain runs to 286 residues: Transcription factor MafA (286 aa).

Residues Ser14 and Ser49 each carry the phosphoserine modification. The span at 51-85 (SSTPLSTPCSSVPSSPSFCAPSPGGQPSAGPTAAP) shows a compositional bias: low complexity. Positions 51–87 (SSTPLSTPCSSVPSSPSFCAPSPGGQPSAGPTAAPLG) are disordered. 2 positions are modified to phosphothreonine: Thr53 and Thr57. Phosphoserine occurs at positions 61 and 65. Thr113 carries the post-translational modification Phosphothreonine. The segment at 126 to 167 (HHHHHHHQSYESFRPQPFGGEELPPAAHHHNAHHHHHHHHLR) is disordered. Residues 152 to 166 (AHHHNAHHHHHHHHL) are compositionally biased toward basic residues. The segment at 199–224 (RLKQNRRTLKNRGYAQSCRYKRVQQR) is basic motif. In terms of domain architecture, bZIP spans 199-262 (RLKQNRRTLK…DLYKEKYEKL (64 aa)). The segment at 227–248 (LENEKCQLQSQVEQLKQEVSRL) is leucine-zipper. The tract at residues 265–286 (RGFPREPSPPAAPKTTAADFFM) is disordered. Ser272 is modified (phosphoserine). Over residues 277–286 (PKTTAADFFM) the composition is skewed to low complexity.

It belongs to the bZIP family. Maf subfamily. Forms homodimers or heterodimers. May interact (via leucine-zipper domain) with MAFB. May interact with FOS and JUN. Interacts with PCAF; this interaction impairs MAFA ubiquitination.

The protein localises to the nucleus. Functionally, transcription factor involved in transcription regulation during lens development, including that of crystallin and filensin/BFSP1 genes. Binds to CRE-type MARE 5'-TGCTGACGTCAGCA-3' and TRE-type MARE 5'-TGCTGACTCAGCA-3' DNA sequences. The sequence is that of Transcription factor MafA (MAFA) from Gallus gallus (Chicken).